We begin with the raw amino-acid sequence, 248 residues long: Granulin (248 aa).

Belongs to the polyhedrin family.

Component of the virus occlusion bodies, which are large proteinaceous structures, that protect the virus from the outside environment for extended periods until they are ingested by insect larvae. This is Granulin from Cydia pomonella (Codling moth).